We begin with the raw amino-acid sequence, 402 residues long: BTB and MATH domain-containing protein 40 (402 aa).

Residues Met-1 to Arg-25 are disordered. The segment covering Ser-15–Arg-25 has biased composition (low complexity). The MATH domain maps to Val-43–Ile-177. The 74-residue stretch at Thr-222–Ile-295 folds into the BTB domain.

In terms of assembly, interacts with cul-3.

It functions in the pathway protein modification; protein ubiquitination. Its function is as follows. Probable substrate-specific adapter of an E3 ubiquitin-protein ligase complex which mediates the ubiquitination and subsequent proteasomal degradation of target proteins. The sequence is that of BTB and MATH domain-containing protein 40 (bath-40) from Caenorhabditis elegans.